An 83-amino-acid polypeptide reads, in one-letter code: Small ribosomal subunit protein bS18 (83 aa).

This sequence belongs to the bacterial ribosomal protein bS18 family. Part of the 30S ribosomal subunit. Forms a tight heterodimer with protein bS6.

Its function is as follows. Binds as a heterodimer with protein bS6 to the central domain of the 16S rRNA, where it helps stabilize the platform of the 30S subunit. The protein is Small ribosomal subunit protein bS18 of Methylobacterium sp. (strain 4-46).